Here is a 1138-residue protein sequence, read N- to C-terminus: Envelopment polyprotein (1138 aa).

The N-terminal stretch at 1 to 18 (MEGWYLVVLGVCYTLTLA) is a signal peptide. Topologically, residues 19–487 (MPKTIYELKM…CVPGLHGWAT (469 aa)) are lumenal. 11 disulfides stabilise this stretch: C30/C155, C64/C161, C113/C132, C137/C142, C179/C189, C214/C250, C239/C354, C379/C438, C383/C392, C408/C427, and C455/C478. N138 carries an N-linked (GlcNAc...) asparagine; by host glycan. N350 carries an N-linked (GlcNAc...) asparagine; by host glycan. N402 carries an N-linked (GlcNAc...) asparagine; by host glycan. A helical transmembrane segment spans residues 488–508 (VMLLSTFCFGWVLIPAVTLII). At 509 to 630 (LKCLRVLTFS…LGVFRYKSRC (122 aa)) the chain is on the cytoplasmic side. Residues 519–536 (CSHYTNESKFKFILEKVK) are binding to the ribonucleoprotein. 2 CCHC-type zinc fingers span residues 548-568 (CDVCHHECETAKELESHRQSC) and 573-594 (CPYCMTITEATESALQAHYSIC). 3 binding to the ribonucleoprotein regions span residues 591-608 (YSICKLTGRFQEALKKSL), 595-606 (KLTGRFQEALKK), and 614-628 (KKGCYRTLGVFRYKS). Residues 610 to 637 (KPEVKKGCYRTLGVFRYKSRCYVGLVWC) are interaction with host TRAF3. Positions 614–637 (KKGCYRTLGVFRYKSRCYVGLVWC) constitute an ITAM domain. Phosphotyrosine occurs at positions 618 and 631. Residues 618-621 (YRTL) carry the YxxL motif. A helical membrane pass occupies residues 631 to 651 (YVGLVWCLLLTCEIVIWAASA). Over 652–1107 (ETPLMESGWS…EWLLGILNGN (456 aa)) the chain is Lumenal. 8 disulfide bridges follow: C738/C773, C742/C780, C754/C887, C768/C898, C783/C906, C809/C818, C826/C835, and C866/C870. The fusion loop stretch occupies residues 760 to 780 (YQYETGWGCNPGDCPGVGTGC). N930 carries N-linked (GlcNAc...) asparagine; by host glycosylation. 5 cysteine pairs are disulfide-bonded: C972–C1002, C995–C1047, C1012–C1017, C1048–C1053, and C1087–C1091. A helical membrane pass occupies residues 1108-1128 (WIVVVVLVVILILSIIMFSVL). The segment at 1124-1138 (MFSVLCPRRGHKKTV) is binding to the ribonucleoprotein. Residues 1129–1138 (CPRRGHKKTV) lie on the Cytoplasmic side of the membrane.

It belongs to the hantavirus envelope glycoprotein family. As to quaternary structure, homodimer. Homotetramer; forms heterotetrameric Gn-Gc spikes in the pre-fusion conformation. Interacts (via C-terminus) with the nucleoprotein. Interacts with host TUFM; this interaction contributes to the virus-induced degradation of mitochondria by autophagy, which leads to degradation of host MAVS and inhibition of type I interferon (IFN) responses. Interacts with host MAP1LC3B; this interaction contributes to the virus-induced degradation of mitochondria by autophagy, which leads to degradation of host MAVS and inhibition of type I interferon (IFN) responses. Interacts (via C-terminus) with host TRAF3; this interaction inhibits the formation of TRAF3-TBK1 complexes. Homodimer. Homotetramer; forms heterotetrameric Gn-Gc spikes in the pre-fusion conformation. Homotrimer; forms homotrimer in the post-fusion conformation at acidic pH. Interacts (via C-terminus) with the nucleoprotein. In terms of processing, envelope polyprotein precursor is quickly cleaved in vivo just after synthesis, presumably by host signal peptidase.

It is found in the virion membrane. It localises to the host cell surface. The protein localises to the host Golgi apparatus membrane. Its subcellular location is the host endoplasmic reticulum membrane. The protein resides in the host mitochondrion. In terms of biological role, forms homotetramers with glycoprotein C at the surface of the virion. Attaches the virion to host cell receptors including integrin ITGAV/ITGB3. This attachment induces virion internalization possibly through clathrin-dependent endocytosis and dynamin-independent macropinocytosis. Mediates the assembly and budding of infectious virus particles through its interaction with the nucleocapsid protein and the viral genome. May dysregulate normal immune and endothelial cell responses through an ITAM motif. Translocates to mitochondria, binds to host TUFM and recruits MAP1LC3B. These interactions induce mitochondrial autophagy and therefore destruction of host MAVS leading to inhibition of type I interferon (IFN) responses. Concomitant breakdown of glycoprotein N is apparently prevented by the nucleoprotein that may inhibit Gn-stimulated autophagosome-lysosome fusion. Interacts with the viral genomic RNA. Inhibits the host RIG-I/TBK1 pathway by disrupting the formation of TBK1-TRAF3 complexes and downstream signaling responses required for IFN-beta transcription. Forms homotetramers with glycoprotein N at the surface of the virion. Attaches the virion to host cell receptors including integrin ITGAV/ITGB3. This attachment induces virion internalization predominantly through clathrin-dependent endocytosis. Class II fusion protein that promotes fusion of viral membrane with host endosomal membrane after endocytosis of the virion. This is Envelopment polyprotein (GP) from Abrothrix longipilis (Long-haired grass mouse).